Here is a 1095-residue protein sequence, read N- to C-terminus: Inactive phospholipase C-like protein 1 (1095 aa).

Over residues 1-11 the composition is skewed to basic and acidic residues; it reads MAEGAAGREDP. Residues 1-61 are disordered; that stretch reads MAEGAAGRED…PGAAGTPADS (61 aa). Phosphoserine occurs at positions 47 and 77. The tract at residues 83–222 is interaction with PPP1C; sequence SNQKCGGRKK…IWVSGLRYLV (140 aa). Threonine 93 is modified (phosphothreonine; by PKA). A Phosphoserine modification is found at serine 95. The region spanning 113–223 is the PH domain; sequence SFMQAGCELK…WVSGLRYLVS (111 aa). The PI-PLC X-box domain occupies 398–542; sequence QDMTQPLSHY…LKRMIIVKGK (145 aa). Residues 543–567 form an interaction with GABA A beta subunit region; sequence KLPSDPDVLEGEVTDEDEEAEMSRR. Residue threonine 556 is modified to Phosphothreonine. Serine 569 is subject to Phosphoserine. One can recognise a PI-PLC Y-box domain in the interval 585–701; the sequence is LSDLVSICKS…GYVLRPSIMR (117 aa). Positions 701–830 constitute a C2 domain; that stretch reads RDEVSYFSAN…PGYRHVPLRS (130 aa). Coiled-coil stretches lie at residues 894–914 and 1034–1059; these read LREAIDMRENMQNAIVSIKEL and LKGQGDLLKNAKNEAIENMKQIQLAC. Residues 1066–1095 form a disordered region; sequence KAPSSSAEAKSKRSLEAIEEKESSEENGKL. Basic and acidic residues predominate over residues 1074-1095; sequence AKSKRSLEAIEEKESSEENGKL. At serine 1079 the chain carries Phosphoserine.

As to quaternary structure, interacts with PPP2CA. Interacts with Ins(1,4,5)P3, Ins(1,4,5,6)P4, GABARAP, GABA receptor beta subunits, GABA receptor gamma-2 subunits and PPP1C. May form a ternary complex with GABA receptor beta subunit and GABARAP. The formation of a ternary complex with GABA receptor beta subunit and GABARAP could be the key step for facilitating the association of GABARAP with the GABA receptor gamma-2 subunit and to allow it to be transported at the right destination. Post-translationally, phosphorylated by the catalytic subunit of PKA. Phosphorylation of Thr-93 resulted in dissociation of PPP1C from PRIP1. In terms of tissue distribution, expressed in a variety of fetal and adult organs including brain, lung and kidney. Its expression was greatly reduced in small and non-small cell lung carcinoma. Isoform 1 is predominantly expressed in brain.

It is found in the cytoplasm. In terms of biological role, involved in an inositol phospholipid-based intracellular signaling cascade. Shows no PLC activity to phosphatidylinositol 4,5-bisphosphate and phosphatidylinositol. Component in the phospho-dependent endocytosis process of GABA A receptor. Regulates the turnover of receptors and thus contributes to the maintenance of GABA-mediated synaptic inhibition. Its aberrant expression could contribute to the genesis and progression of lung carcinoma. Acts as an inhibitor of PPP1C. This is Inactive phospholipase C-like protein 1 (PLCL1) from Homo sapiens (Human).